Consider the following 470-residue polypeptide: Glutamate--tRNA ligase (470 aa).

Residues proline 9–glycine 19 carry the 'HIGH' region motif. Residues lysine 236–arginine 240 carry the 'KMSKS' region motif. Lysine 239 is an ATP binding site.

This sequence belongs to the class-I aminoacyl-tRNA synthetase family. Glutamate--tRNA ligase type 1 subfamily. In terms of assembly, monomer.

The protein resides in the cytoplasm. The catalysed reaction is tRNA(Glu) + L-glutamate + ATP = L-glutamyl-tRNA(Glu) + AMP + diphosphate. Its function is as follows. Catalyzes the attachment of glutamate to tRNA(Glu) in a two-step reaction: glutamate is first activated by ATP to form Glu-AMP and then transferred to the acceptor end of tRNA(Glu). This Psychromonas ingrahamii (strain DSM 17664 / CCUG 51855 / 37) protein is Glutamate--tRNA ligase.